Here is a 227-residue protein sequence, read N- to C-terminus: Translation initiation factor 6 (227 aa).

This sequence belongs to the eIF-6 family.

In terms of biological role, binds to the 50S ribosomal subunit and prevents its association with the 30S ribosomal subunit to form the 70S initiation complex. The sequence is that of Translation initiation factor 6 from Methanococcus maripaludis (strain DSM 14266 / JCM 13030 / NBRC 101832 / S2 / LL).